The primary structure comprises 175 residues: UPF0398 protein SPP_0409 (175 aa).

It belongs to the UPF0398 family.

The chain is UPF0398 protein SPP_0409 from Streptococcus pneumoniae (strain P1031).